A 150-amino-acid polypeptide reads, in one-letter code: MQIILLEKVANLGNLGDIVKVKDGYARNFLIPNRKARRATKEAIAEFEVRRAELEKIAAEKLAASQAVGEKLNGQSFEITQKSGVDGRLFGSVTNADVAELLKKAGFDVEKSQVRMPEGPLKMIGEHGVQVALHTDVVVDVTINVIGDHA.

The protein belongs to the bacterial ribosomal protein bL9 family.

Its function is as follows. Binds to the 23S rRNA. This is Large ribosomal subunit protein bL9 from Burkholderia multivorans (strain ATCC 17616 / 249).